The chain runs to 344 residues: N-acetyl-gamma-glutamyl-phosphate reductase (344 aa).

Cys-149 is an active-site residue.

Belongs to the NAGSA dehydrogenase family. Type 1 subfamily.

The protein localises to the cytoplasm. The catalysed reaction is N-acetyl-L-glutamate 5-semialdehyde + phosphate + NADP(+) = N-acetyl-L-glutamyl 5-phosphate + NADPH + H(+). It functions in the pathway amino-acid biosynthesis; L-arginine biosynthesis; N(2)-acetyl-L-ornithine from L-glutamate: step 3/4. In terms of biological role, catalyzes the NADPH-dependent reduction of N-acetyl-5-glutamyl phosphate to yield N-acetyl-L-glutamate 5-semialdehyde. The chain is N-acetyl-gamma-glutamyl-phosphate reductase from Halorhodospira halophila (strain DSM 244 / SL1) (Ectothiorhodospira halophila (strain DSM 244 / SL1)).